Consider the following 577-residue polypeptide: 2-hydroxyacyl-CoA lyase (577 aa).

Glu-59 lines the thiamine diphosphate pocket. The tract at residues 412–493 (TMDVGRAVLV…VIVFNNNGVY (82 aa)) is thiamine pyrophosphate binding. Residues Asp-462 and Asn-489 each coordinate Mg(2+).

It belongs to the TPP enzyme family. As to quaternary structure, homotetramer. It depends on Mg(2+) as a cofactor. Thiamine diphosphate serves as cofactor.

It catalyses the reaction an (R)-2-hydroxy-long-chain-fatty acyl-CoA = a long-chain fatty aldehyde + formyl-CoA. The enzyme catalyses a 2-hydroxy-3-methyl fatty acyl-CoA = a 2-methyl-branched fatty aldehyde + formyl-CoA. Its function is as follows. Catalyzes a carbon-carbon cleavage reaction; cleaves a 2-hydroxy-3-methylacyl-CoA into formyl-CoA and a 2-methyl-branched fatty aldehyde. The protein is 2-hydroxyacyl-CoA lyase of Oryza sativa subsp. japonica (Rice).